The chain runs to 415 residues: MSEDVSKNLSETLFVKHKQAKETSALTQYMPTSKKILDDREQQEDRAWYRHLRRLQWAWQGLSPIEMEGVLSRIASSTHSRTHDDWLDTVMGYHSGNWTFEWIKLGMEHQRRANDLKGEDAADELFTASLCFSIAGYPHLKNDNLALQAQVLANKAYSEGAEKTQYTIKQIEVPYQKRKIIANLHLPRTDKQLPVVMVSAGLDSLQTDMWRLFRNHFAPKDIAMLTVDMPSVGHSSHWPLTEDSSCLHQAVLNELYSIPYVDHHKVGLVGFRFGGNAMVRLSFLEQEKIKACVALGAPVHDLFTSPKKLQKMPKMYLDMLASRLGKSAVDINSMAGQMMAWSLKVQGFLSSRKTKVPILALSLEGDPVSPYSDNQLVALFSHYGQAKKISSKTITKGYEQSLDLAIKWLEDELLR.

This sequence belongs to the FrsA family.

The enzyme catalyses a carboxylic ester + H2O = an alcohol + a carboxylate + H(+). Its function is as follows. Catalyzes the hydrolysis of esters. The protein is Esterase FrsA of Vibrio parahaemolyticus serotype O3:K6 (strain RIMD 2210633).